A 248-amino-acid polypeptide reads, in one-letter code: Probable transcriptional regulatory protein P9303_05381 (248 aa).

This sequence belongs to the TACO1 family.

The protein resides in the cytoplasm. This Prochlorococcus marinus (strain MIT 9303) protein is Probable transcriptional regulatory protein P9303_05381.